The sequence spans 208 residues: MPGLRILCLHGQGSNTEIMKAQLGPITKLLKQNGVATFEWLEGTIPTEAGPGVSGVFEDEQSIREACEDLEDYLEENGPYDGILGFSQGSTLLAEFLCDFARRNPGNEPPCRCAIFMNGIPPYRMGDDEKPIIDYGLLEHFPSIPTLHVVGKKDFVYEYSTILQASTASAWATLIAHEKGHEISNDTRIVQKINSAFEQMSIRIALGC.

Serine 87 acts as the Charge relay system in catalysis.

It belongs to the LovG family.

The protein operates within secondary metabolite biosynthesis. Its function is as follows. Hydrolase; part of the gene cluster that mediates the biosynthesis of the antihypercholesterolemic agents phomoidrides which are dimeric anhydrides. Within the pathway, phiM releases the C12-fatty acyl chain from phiA. The pathway begins with the highly reducing polyketide synthase phiA that catalyzes the formation of a C12-fatty acyl-ACP, starting from one acetate and 5 malonate units. The hydrolase phiM is involved in the release of the C12-fatty acyl chain from phiA. The alkylcitrate synthase (ACS) phiJ and the alkylcitrate dehydratase (ACDH) phiI then give rise to decarboxylated monomeric anhydrides by coupling the C12-fatty acyl chain with oxalacetic acid. The cyclase phiC is responsible for the dimerization of the monomeric anhydrides which leads to the production of prephomoidride that contains the characteristic bicyclo[4.3.1]deca-1,6-diene system of phomoidrides. Iterative oxidation catalyzed by the alpha-ketoglutarate-dependent dioxygenase phiK produced then phomoidride A. Finally, the methyltransferase phiE converts phomoidride A to phomoidride B via an acetalization reaction. The phosphatidylethanolamine-binding protein phiB and phiN are not essential for dimerization and their functions have still to be determined. The sequence is that of Hydrolase phiM from Fungal sp. (strain ATCC 74256).